A 147-amino-acid chain; its full sequence is Fluoride-specific ion channel FluC 1 (147 aa).

Helical transmembrane passes span 29-49 (YVYI…ISFL), 61-81 (IANL…IAFF), 90-110 (AITT…LELI), and 118-138 (FITL…LCYV). Na(+) is bound by residues G97 and T100.

The protein belongs to the fluoride channel Fluc/FEX (TC 1.A.43) family.

It is found in the cell membrane. It catalyses the reaction fluoride(in) = fluoride(out). With respect to regulation, na(+) is not transported, but it plays an essential structural role and its presence is essential for fluoride channel function. Its function is as follows. Fluoride-specific ion channel. Important for reducing fluoride concentration in the cell, thus reducing its toxicity. The chain is Fluoride-specific ion channel FluC 1 from Staphylococcus aureus (strain Mu50 / ATCC 700699).